A 518-amino-acid polypeptide reads, in one-letter code: Bifunctional purine biosynthesis protein PurH (518 aa).

The 146-residue stretch at 1–146 (MARIALISVS…KNHESVSILT (146 aa)) folds into the MGS-like domain.

This sequence belongs to the PurH family.

It catalyses the reaction (6R)-10-formyltetrahydrofolate + 5-amino-1-(5-phospho-beta-D-ribosyl)imidazole-4-carboxamide = 5-formamido-1-(5-phospho-D-ribosyl)imidazole-4-carboxamide + (6S)-5,6,7,8-tetrahydrofolate. It carries out the reaction IMP + H2O = 5-formamido-1-(5-phospho-D-ribosyl)imidazole-4-carboxamide. Its pathway is purine metabolism; IMP biosynthesis via de novo pathway; 5-formamido-1-(5-phospho-D-ribosyl)imidazole-4-carboxamide from 5-amino-1-(5-phospho-D-ribosyl)imidazole-4-carboxamide (10-formyl THF route): step 1/1. It functions in the pathway purine metabolism; IMP biosynthesis via de novo pathway; IMP from 5-formamido-1-(5-phospho-D-ribosyl)imidazole-4-carboxamide: step 1/1. The sequence is that of Bifunctional purine biosynthesis protein PurH from Prochlorococcus marinus (strain MIT 9211).